A 425-amino-acid polypeptide reads, in one-letter code: Glutamyl-tRNA reductase (425 aa).

Substrate contacts are provided by residues 51 to 54 (TCNR), S111, 116 to 118 (DMQ), and Q122. Residue C52 is the Nucleophile of the active site. An NADP(+)-binding site is contributed by 191 to 196 (GLGEIG).

Belongs to the glutamyl-tRNA reductase family. In terms of assembly, homodimer.

It carries out the reaction (S)-4-amino-5-oxopentanoate + tRNA(Glu) + NADP(+) = L-glutamyl-tRNA(Glu) + NADPH + H(+). It participates in porphyrin-containing compound metabolism; protoporphyrin-IX biosynthesis; 5-aminolevulinate from L-glutamyl-tRNA(Glu): step 1/2. Catalyzes the NADPH-dependent reduction of glutamyl-tRNA(Glu) to glutamate 1-semialdehyde (GSA). This chain is Glutamyl-tRNA reductase, found in Cytophaga hutchinsonii (strain ATCC 33406 / DSM 1761 / CIP 103989 / NBRC 15051 / NCIMB 9469 / D465).